We begin with the raw amino-acid sequence, 188 residues long: Transcription factor E (188 aa).

Residues 9–98 enclose the HTH TFE/IIEalpha-type domain; the sequence is DLEVLRDVTL…SWRLNLREVL (90 aa).

The protein belongs to the TFE family. In terms of assembly, monomer. Interaction with RNA polymerase subunits RpoF and RpoE is necessary for Tfe stimulatory transcription activity. Able to interact with Tbp and RNA polymerase in the absence of DNA promoter. Interacts both with the preinitiation and elongation complexes.

Its function is as follows. Transcription factor that plays a role in the activation of archaeal genes transcribed by RNA polymerase. Facilitates transcription initiation by enhancing TATA-box recognition by TATA-box-binding protein (Tbp), and transcription factor B (Tfb) and RNA polymerase recruitment. Not absolutely required for transcription in vitro, but particularly important in cases where Tbp or Tfb function is not optimal. It dynamically alters the nucleic acid-binding properties of RNA polymerases by stabilizing the initiation complex and destabilizing elongation complexes. Seems to translocate with the RNA polymerase following initiation and acts by binding to the non template strand of the transcription bubble in elongation complexes. This is Transcription factor E from Methanopyrus kandleri (strain AV19 / DSM 6324 / JCM 9639 / NBRC 100938).